Consider the following 238-residue polypeptide: Orotidine 5'-phosphate decarboxylase (238 aa).

Substrate contacts are provided by residues Asp10, Lys32, 59 to 68 (DLKLHDIPNT), Thr122, Arg184, Gln193, Gly213, and Arg214. Catalysis depends on Lys61, which acts as the Proton donor.

The protein belongs to the OMP decarboxylase family. Type 1 subfamily. In terms of assembly, homodimer.

It catalyses the reaction orotidine 5'-phosphate + H(+) = UMP + CO2. The protein operates within pyrimidine metabolism; UMP biosynthesis via de novo pathway; UMP from orotate: step 2/2. Catalyzes the decarboxylation of orotidine 5'-monophosphate (OMP) to uridine 5'-monophosphate (UMP). This is Orotidine 5'-phosphate decarboxylase from Bacillus thuringiensis subsp. konkukian (strain 97-27).